We begin with the raw amino-acid sequence, 138 residues long: Ribosome-binding factor A (138 aa).

Positions Met1 to Ser20 are enriched in low complexity. The segment at Met1–Gln21 is disordered.

It belongs to the RbfA family. In terms of assembly, monomer. Binds 30S ribosomal subunits, but not 50S ribosomal subunits or 70S ribosomes.

It localises to the cytoplasm. Its function is as follows. One of several proteins that assist in the late maturation steps of the functional core of the 30S ribosomal subunit. Associates with free 30S ribosomal subunits (but not with 30S subunits that are part of 70S ribosomes or polysomes). Required for efficient processing of 16S rRNA. May interact with the 5'-terminal helix region of 16S rRNA. In Granulibacter bethesdensis (strain ATCC BAA-1260 / CGDNIH1), this protein is Ribosome-binding factor A.